Consider the following 255-residue polypeptide: NAD kinase (255 aa).

Asp44 acts as the Proton acceptor in catalysis. NAD(+) is bound by residues 44–45, His49, 114–115, Asp144, Ala152, 155–160, and Gln216; these read DG, NE, and SAYNLS.

The protein belongs to the NAD kinase family. The cofactor is a divalent metal cation.

It is found in the cytoplasm. The catalysed reaction is NAD(+) + ATP = ADP + NADP(+) + H(+). Involved in the regulation of the intracellular balance of NAD and NADP, and is a key enzyme in the biosynthesis of NADP. Catalyzes specifically the phosphorylation on 2'-hydroxyl of the adenosine moiety of NAD to yield NADP. In Rickettsia felis (strain ATCC VR-1525 / URRWXCal2) (Rickettsia azadi), this protein is NAD kinase.